The chain runs to 666 residues: MIAANPTDLEVYLFHEGRLYQSYELFGAHVIRGGGAVGTRFCVWAPHAREVRLVGSFNDWNGTNSPLTKVNDEGVWTIVVPENLEGHLYKYEIITPDGRVLLKADPYAFYSELRPHTASIVYDLKGYEWNDSPWQRKKRRKRIYDQPMVIYELHFGSWKKKPDGRFYTYREMADELIPYVLERGFTHIELLPLVEHPLDRSWGYQGTGYYSVTSRYGTPHDFMYFVDRCHQAGLGVIIDWVPGHFCKDAHGLYMFDGAPTYEYANEKDRENYVWGTANFDLGKPEVRSFLISNALFWLEYYHVDGFRVDAVANMLYWPNNDRLYENPYAVEFLRQLNEAVFAYDPNVWMIAEDSTDWPRVTAPTYDGGLGFNYKWNMGWMNDMLKYMETPPHERKYAHNQVSFSLLYAYSENFILPFSHDEVVHGKKSLLNKMPGSYEEKFAQLRLLYGYMMAHPGKKLLFMGSEFAQFDEWKFAEELDWVLFDFELHRKMDEYVKQLIACYKRYKPFYELDHDPRGFEWIDVHNAEQSIFSFIRRGKKEGDVLVIVCNFTNQAYDDYKVSVPLLAPYREVLNSDAAEFGGSGHVNGKRLPAFSEPFHGKPYHVRMTIPPFGISILRPVQKRGERKQNEEEVHRHVIGRRARKPASLADEKHRETSRAVWGEVPDH.

Asp309 acts as the Nucleophile in catalysis. Glu352 serves as the catalytic Proton donor. The segment covering 622–634 (RGERKQNEEEVHR) has biased composition (basic and acidic residues). The tract at residues 622 to 666 (RGERKQNEEEVHRHVIGRRARKPASLADEKHRETSRAVWGEVPDH) is disordered.

Belongs to the glycosyl hydrolase 13 family. GlgB subfamily. Monomer.

The enzyme catalyses Transfers a segment of a (1-&gt;4)-alpha-D-glucan chain to a primary hydroxy group in a similar glucan chain.. The protein operates within glycan biosynthesis; glycogen biosynthesis. Catalyzes the formation of the alpha-1,6-glucosidic linkages in glycogen by scission of a 1,4-alpha-linked oligosaccharide from growing alpha-1,4-glucan chains and the subsequent attachment of the oligosaccharide to the alpha-1,6 position. This chain is 1,4-alpha-glucan branching enzyme GlgB (glgB), found in Bacillus caldolyticus.